A 145-amino-acid polypeptide reads, in one-letter code: Phosphoribosyl-AMP cyclohydrolase (145 aa).

Aspartate 87 lines the Mg(2+) pocket. Cysteine 88 provides a ligand contact to Zn(2+). Positions 89 and 91 each coordinate Mg(2+). Zn(2+) is bound by residues cysteine 104 and cysteine 111.

The protein belongs to the PRA-CH family. In terms of assembly, homodimer. Mg(2+) serves as cofactor. Requires Zn(2+) as cofactor.

It is found in the cytoplasm. It carries out the reaction 1-(5-phospho-beta-D-ribosyl)-5'-AMP + H2O = 1-(5-phospho-beta-D-ribosyl)-5-[(5-phospho-beta-D-ribosylamino)methylideneamino]imidazole-4-carboxamide. Its pathway is amino-acid biosynthesis; L-histidine biosynthesis; L-histidine from 5-phospho-alpha-D-ribose 1-diphosphate: step 3/9. Catalyzes the hydrolysis of the adenine ring of phosphoribosyl-AMP. The polypeptide is Phosphoribosyl-AMP cyclohydrolase (Nitrobacter winogradskyi (strain ATCC 25391 / DSM 10237 / CIP 104748 / NCIMB 11846 / Nb-255)).